Consider the following 261-residue polypeptide: Cytochrome c oxidase subunit 3 (261 aa).

The Mitochondrial matrix segment spans residues 1–15 (MTNQLHPFHMTNPSP). A helical transmembrane segment spans residues 16–34 (WPLTGATAALLMTSGLIMW). Over 35-40 (FHYNSS) the chain is Mitochondrial intermembrane. A helical membrane pass occupies residues 41–66 (QLIMLGLLIMLLTLTQWWRDIVREST). Residues 67-72 (FQGHHT) lie on the Mitochondrial matrix side of the membrane. A helical membrane pass occupies residues 73–105 (PSVQNNLRYGMILFITSEILFFTGFFWAFYHSS). At 106 to 128 (LSPTAELGNIWPPTGITPLNPFE) the chain is on the mitochondrial intermembrane side. The helical transmembrane segment at 129 to 152 (VPLLNTAVLLASGVTITWAHHSLM) threads the bilayer. The Mitochondrial matrix portion of the chain corresponds to 153-155 (EGN). A helical transmembrane segment spans residues 156–183 (RPQTLQALTLTIILGTYFTILQAMEYFE). Over 184 to 190 (ASFTIAD) the chain is Mitochondrial intermembrane. A helical membrane pass occupies residues 191–223 (SIYGSTFFVATGFHGLHVIIGSTFLIVCLMRQL). The Mitochondrial matrix portion of the chain corresponds to 224–232 (KYHFTSHHH). The helical transmembrane segment at 233–256 (FGFEAAAWYWHFVDVIWLFLYLSI) threads the bilayer. Residues 257–261 (YWWGS) are Mitochondrial intermembrane-facing.

The protein belongs to the cytochrome c oxidase subunit 3 family. In terms of assembly, component of the cytochrome c oxidase (complex IV, CIV), a multisubunit enzyme composed of 14 subunits. The complex is composed of a catalytic core of 3 subunits MT-CO1, MT-CO2 and MT-CO3, encoded in the mitochondrial DNA, and 11 supernumerary subunits COX4I, COX5A, COX5B, COX6A, COX6B, COX6C, COX7A, COX7B, COX7C, COX8 and NDUFA4, which are encoded in the nuclear genome. The complex exists as a monomer or a dimer and forms supercomplexes (SCs) in the inner mitochondrial membrane with NADH-ubiquinone oxidoreductase (complex I, CI) and ubiquinol-cytochrome c oxidoreductase (cytochrome b-c1 complex, complex III, CIII), resulting in different assemblies (supercomplex SCI(1)III(2)IV(1) and megacomplex MCI(2)III(2)IV(2)).

It is found in the mitochondrion inner membrane. It catalyses the reaction 4 Fe(II)-[cytochrome c] + O2 + 8 H(+)(in) = 4 Fe(III)-[cytochrome c] + 2 H2O + 4 H(+)(out). Component of the cytochrome c oxidase, the last enzyme in the mitochondrial electron transport chain which drives oxidative phosphorylation. The respiratory chain contains 3 multisubunit complexes succinate dehydrogenase (complex II, CII), ubiquinol-cytochrome c oxidoreductase (cytochrome b-c1 complex, complex III, CIII) and cytochrome c oxidase (complex IV, CIV), that cooperate to transfer electrons derived from NADH and succinate to molecular oxygen, creating an electrochemical gradient over the inner membrane that drives transmembrane transport and the ATP synthase. Cytochrome c oxidase is the component of the respiratory chain that catalyzes the reduction of oxygen to water. Electrons originating from reduced cytochrome c in the intermembrane space (IMS) are transferred via the dinuclear copper A center (CU(A)) of subunit 2 and heme A of subunit 1 to the active site in subunit 1, a binuclear center (BNC) formed by heme A3 and copper B (CU(B)). The BNC reduces molecular oxygen to 2 water molecules using 4 electrons from cytochrome c in the IMS and 4 protons from the mitochondrial matrix. The chain is Cytochrome c oxidase subunit 3 (MT-CO3) from Pelomedusa subrufa (African side-necked turtle).